Consider the following 621-residue polypeptide: Glutathione-regulated potassium-efflux system protein KefC (621 aa).

12 helical membrane-spanning segments follow: residues 4-24 (HTLIQALIYLGAAALIVPVAV), 26-46 (LGLGSVLGYLIAGCIIGPWGF), 54-74 (SILHFAEIGVVLMLFVIGLEL), 90-110 (GALQMIACGALLGGFCILLGM), 114-134 (VAELIGMTLALSSTAIAMQAM), 151-171 (VLLFQDIAAIPLVAMIPLLAV), 178-198 (LGAFALSALKVAGALALVILL), 218-238 (VFSAVALFLVFGFGLLLEEAG), 270-290 (GLLLGLFFIGVGMSVDFGTLV), 294-314 (LRILILLVGFLVIKMGMLWLI), 327-347 (WFAVLLGQGSEFAFVVFGAAQ), and 359-379 (ALTLAVALSMAVTPILLVLLT). The RCK N-terminal domain maps to 399 to 518 (QPRVIIAGFG…AGVETPERET (120 aa)). The disordered stretch occupies residues 591-621 (LSLTQRHGWQGTEEGKHTGDPRDEPESKPTV). The segment covering 603–621 (EEGKHTGDPRDEPESKPTV) has biased composition (basic and acidic residues).

This sequence belongs to the monovalent cation:proton antiporter 2 (CPA2) transporter (TC 2.A.37) family. KefC subfamily. Homodimer. Interacts with the regulatory subunit KefF.

It is found in the cell inner membrane. Its function is as follows. Pore-forming subunit of a potassium efflux system that confers protection against electrophiles. Catalyzes K(+)/H(+) antiport. The protein is Glutathione-regulated potassium-efflux system protein KefC of Enterobacter sp. (strain 638).